A 597-amino-acid polypeptide reads, in one-letter code: Elongation factor 4 (597 aa).

The tr-type G domain maps to 2-184 (QHIRNFSIIA…AVISRIPPPK (183 aa)). GTP is bound by residues 14–19 (DHGKST) and 131–134 (NKID).

The protein belongs to the TRAFAC class translation factor GTPase superfamily. Classic translation factor GTPase family. LepA subfamily.

The protein localises to the cell inner membrane. It catalyses the reaction GTP + H2O = GDP + phosphate + H(+). Its function is as follows. Required for accurate and efficient protein synthesis under certain stress conditions. May act as a fidelity factor of the translation reaction, by catalyzing a one-codon backward translocation of tRNAs on improperly translocated ribosomes. Back-translocation proceeds from a post-translocation (POST) complex to a pre-translocation (PRE) complex, thus giving elongation factor G a second chance to translocate the tRNAs correctly. Binds to ribosomes in a GTP-dependent manner. The chain is Elongation factor 4 from Nitrosospira multiformis (strain ATCC 25196 / NCIMB 11849 / C 71).